Here is a 309-residue protein sequence, read N- to C-terminus: Probable manganese-dependent inorganic pyrophosphatase (309 aa).

Mn(2+) contacts are provided by H9, D13, D15, D75, H97, and D149.

This sequence belongs to the PPase class C family. Mn(2+) serves as cofactor.

The protein localises to the cytoplasm. It catalyses the reaction diphosphate + H2O = 2 phosphate + H(+). The sequence is that of Probable manganese-dependent inorganic pyrophosphatase from Bacillus velezensis (strain DSM 23117 / BGSC 10A6 / LMG 26770 / FZB42) (Bacillus amyloliquefaciens subsp. plantarum).